The sequence spans 161 residues: Regulator of ribonuclease activity A (161 aa).

It belongs to the RraA family. In terms of assembly, homotrimer. Binds to both RNA-binding sites in the C-terminal region of Rne and to RhlB.

The protein localises to the cytoplasm. Globally modulates RNA abundance by binding to RNase E (Rne) and regulating its endonucleolytic activity. Can modulate Rne action in a substrate-dependent manner by altering the composition of the degradosome. Modulates RNA-binding and helicase activities of the degradosome. This is Regulator of ribonuclease activity A from Salmonella choleraesuis (strain SC-B67).